Consider the following 83-residue polypeptide: EMBRYO SURROUNDING FACTOR 1.1 (83 aa).

The signal sequence occupies residues 1 to 22 (MKSSHTSLICILMLSLVALHQC). Intrachain disulfides connect Cys-41–Cys-56, Cys-46–Cys-75, Cys-54–Cys-71, and Cys-57–Cys-64.

It belongs to the MEG family. As to expression, expressed exclusively in ovule embryo sacs and in early developing endosperms.

Functionally, maternally-contributed central cell peptide regulating suspensor development and correct auxin distribution in early developing embryos. In Arabidopsis thaliana (Mouse-ear cress), this protein is EMBRYO SURROUNDING FACTOR 1.1 (ESF1.1).